A 282-amino-acid polypeptide reads, in one-letter code: Elongation factor Ts (282 aa).

The tract at residues 80-83 (TDFV) is involved in Mg(2+) ion dislocation from EF-Tu.

The protein belongs to the EF-Ts family.

It is found in the cytoplasm. Associates with the EF-Tu.GDP complex and induces the exchange of GDP to GTP. It remains bound to the aminoacyl-tRNA.EF-Tu.GTP complex up to the GTP hydrolysis stage on the ribosome. The sequence is that of Elongation factor Ts from Protochlamydia amoebophila (strain UWE25).